Here is a 274-residue protein sequence, read N- to C-terminus: NADH-ubiquinone oxidoreductase chain 2 (274 aa).

Helical transmembrane passes span 28–48, 54–74, 79–99, 107–127, 128–148, 171–191, 206–226, and 254–274; these read MIIMSALLLKSGAAPFHFWFP, LTWMNALVLMTWQKIAPLMLI, IKYLLLISVILSVIIGAIGGL, LMAFSSINHLGWMLSSLMISE, SIWLIYFFFYSFLSFVLTFMF, FTLFMNFLSLGGLPPFLGFLP, FLLLLMMMSTLITLFFYLRIC, and LIMTFFSIFGLFMISLFYFMF.

Belongs to the complex I subunit 2 family.

It localises to the mitochondrion inner membrane. It catalyses the reaction a ubiquinone + NADH + 5 H(+)(in) = a ubiquinol + NAD(+) + 4 H(+)(out). Core subunit of the mitochondrial membrane respiratory chain NADH dehydrogenase (Complex I) that is believed to belong to the minimal assembly required for catalysis. Complex I functions in the transfer of electrons from NADH to the respiratory chain. The immediate electron acceptor for the enzyme is believed to be ubiquinone. In Drosophila mauritiana (Fruit fly), this protein is NADH-ubiquinone oxidoreductase chain 2 (mt:ND2).